Consider the following 422-residue polypeptide: Enolase (422 aa).

Gln-161 serves as a coordination point for (2R)-2-phosphoglycerate. Glu-203 functions as the Proton donor in the catalytic mechanism. Mg(2+)-binding residues include Asp-240, Glu-283, and Asp-310. (2R)-2-phosphoglycerate-binding residues include Lys-335, Arg-364, Ser-365, and Lys-386. Lys-335 functions as the Proton acceptor in the catalytic mechanism.

Belongs to the enolase family. The cofactor is Mg(2+).

The protein localises to the cytoplasm. The protein resides in the secreted. Its subcellular location is the cell surface. It catalyses the reaction (2R)-2-phosphoglycerate = phosphoenolpyruvate + H2O. Its pathway is carbohydrate degradation; glycolysis; pyruvate from D-glyceraldehyde 3-phosphate: step 4/5. Its function is as follows. Catalyzes the reversible conversion of 2-phosphoglycerate (2-PG) into phosphoenolpyruvate (PEP). It is essential for the degradation of carbohydrates via glycolysis. The protein is Enolase of Deinococcus geothermalis (strain DSM 11300 / CIP 105573 / AG-3a).